The following is a 217-amino-acid chain: 3,4-dihydroxy-2-butanone 4-phosphate synthase (217 aa).

D-ribulose 5-phosphate-binding positions include 37–38 (RE), aspartate 42, 150–154 (RGGHT), and glutamate 174. Residue glutamate 38 participates in Mg(2+) binding. Histidine 153 lines the Mg(2+) pocket.

This sequence belongs to the DHBP synthase family. In terms of assembly, homodimer. Requires Mg(2+) as cofactor. Mn(2+) serves as cofactor.

It catalyses the reaction D-ribulose 5-phosphate = (2S)-2-hydroxy-3-oxobutyl phosphate + formate + H(+). The protein operates within cofactor biosynthesis; riboflavin biosynthesis; 2-hydroxy-3-oxobutyl phosphate from D-ribulose 5-phosphate: step 1/1. Its function is as follows. Catalyzes the conversion of D-ribulose 5-phosphate to formate and 3,4-dihydroxy-2-butanone 4-phosphate. The protein is 3,4-dihydroxy-2-butanone 4-phosphate synthase of Escherichia coli O127:H6 (strain E2348/69 / EPEC).